The sequence spans 249 residues: Methylthioribulose-1-phosphate dehydratase (249 aa).

Positions 1–25 (MVDIKPEQTQEGNNNDHLVQSDDPE) are disordered. Positions 9-18 (TQEGNNNDHL) are enriched in polar residues. C105 lines the substrate pocket. Residues H122 and H124 each contribute to the Zn(2+) site. Catalysis depends on E151, which acts as the Proton donor/acceptor. H207 contacts Zn(2+).

This sequence belongs to the aldolase class II family. MtnB subfamily. Zn(2+) serves as cofactor.

It localises to the cytoplasm. It carries out the reaction 5-(methylsulfanyl)-D-ribulose 1-phosphate = 5-methylsulfanyl-2,3-dioxopentyl phosphate + H2O. The protein operates within amino-acid biosynthesis; L-methionine biosynthesis via salvage pathway; L-methionine from S-methyl-5-thio-alpha-D-ribose 1-phosphate: step 2/6. In terms of biological role, catalyzes the dehydration of methylthioribulose-1-phosphate (MTRu-1-P) into 2,3-diketo-5-methylthiopentyl-1-phosphate (DK-MTP-1-P). This Arthroderma otae (strain ATCC MYA-4605 / CBS 113480) (Microsporum canis) protein is Methylthioribulose-1-phosphate dehydratase.